The sequence spans 422 residues: Serine--tRNA ligase (422 aa).

231 to 233 (TSE) provides a ligand contact to L-serine. 262–264 (RQE) provides a ligand contact to ATP. L-serine is bound at residue Glu285. 349-352 (EISS) contributes to the ATP binding site. Residue Ser384 participates in L-serine binding.

This sequence belongs to the class-II aminoacyl-tRNA synthetase family. Type-1 seryl-tRNA synthetase subfamily. Homodimer. The tRNA molecule binds across the dimer.

The protein localises to the cytoplasm. It carries out the reaction tRNA(Ser) + L-serine + ATP = L-seryl-tRNA(Ser) + AMP + diphosphate + H(+). The enzyme catalyses tRNA(Sec) + L-serine + ATP = L-seryl-tRNA(Sec) + AMP + diphosphate + H(+). The protein operates within aminoacyl-tRNA biosynthesis; selenocysteinyl-tRNA(Sec) biosynthesis; L-seryl-tRNA(Sec) from L-serine and tRNA(Sec): step 1/1. Functionally, catalyzes the attachment of serine to tRNA(Ser). Is also able to aminoacylate tRNA(Sec) with serine, to form the misacylated tRNA L-seryl-tRNA(Sec), which will be further converted into selenocysteinyl-tRNA(Sec). The protein is Serine--tRNA ligase of Mycoplasma capricolum subsp. capricolum (strain California kid / ATCC 27343 / NCTC 10154).